The chain runs to 479 residues: Protein nucleotidyltransferase YdiU (479 aa).

G83, G85, R86, K106, D118, G119, R169, and R176 together coordinate ATP. D245 functions as the Proton acceptor in the catalytic mechanism. Mg(2+)-binding residues include N246 and D255. D255 contributes to the ATP binding site.

The protein belongs to the SELO family. Requires Mg(2+) as cofactor. The cofactor is Mn(2+).

It catalyses the reaction L-seryl-[protein] + ATP = 3-O-(5'-adenylyl)-L-seryl-[protein] + diphosphate. The enzyme catalyses L-threonyl-[protein] + ATP = 3-O-(5'-adenylyl)-L-threonyl-[protein] + diphosphate. It carries out the reaction L-tyrosyl-[protein] + ATP = O-(5'-adenylyl)-L-tyrosyl-[protein] + diphosphate. The catalysed reaction is L-histidyl-[protein] + UTP = N(tele)-(5'-uridylyl)-L-histidyl-[protein] + diphosphate. It catalyses the reaction L-seryl-[protein] + UTP = O-(5'-uridylyl)-L-seryl-[protein] + diphosphate. The enzyme catalyses L-tyrosyl-[protein] + UTP = O-(5'-uridylyl)-L-tyrosyl-[protein] + diphosphate. Its function is as follows. Nucleotidyltransferase involved in the post-translational modification of proteins. It can catalyze the addition of adenosine monophosphate (AMP) or uridine monophosphate (UMP) to a protein, resulting in modifications known as AMPylation and UMPylation. This chain is Protein nucleotidyltransferase YdiU, found in Erwinia tasmaniensis (strain DSM 17950 / CFBP 7177 / CIP 109463 / NCPPB 4357 / Et1/99).